We begin with the raw amino-acid sequence, 401 residues long: 4-hydroxy-3-methylbut-2-enyl diphosphate reductase (401 aa).

Cys-66 provides a ligand contact to [4Fe-4S] cluster. His-96 lines the (2E)-4-hydroxy-3-methylbut-2-enyl diphosphate pocket. A dimethylallyl diphosphate-binding site is contributed by His-96. Residue His-96 participates in isopentenyl diphosphate binding. Cys-157 contributes to the [4Fe-4S] cluster binding site. His-185 serves as a coordination point for (2E)-4-hydroxy-3-methylbut-2-enyl diphosphate. A dimethylallyl diphosphate-binding site is contributed by His-185. Isopentenyl diphosphate is bound at residue His-185. Glu-187 serves as the catalytic Proton donor. Residue Thr-250 participates in (2E)-4-hydroxy-3-methylbut-2-enyl diphosphate binding. Residue Cys-288 participates in [4Fe-4S] cluster binding. Residues Ser-317, Ser-318, Asn-319, and Ser-381 each contribute to the (2E)-4-hydroxy-3-methylbut-2-enyl diphosphate site. Residues Ser-317, Ser-318, Asn-319, and Ser-381 each contribute to the dimethylallyl diphosphate site. Isopentenyl diphosphate contacts are provided by Ser-317, Ser-318, Asn-319, and Ser-381.

The protein belongs to the IspH family. It depends on [4Fe-4S] cluster as a cofactor.

It carries out the reaction isopentenyl diphosphate + 2 oxidized [2Fe-2S]-[ferredoxin] + H2O = (2E)-4-hydroxy-3-methylbut-2-enyl diphosphate + 2 reduced [2Fe-2S]-[ferredoxin] + 2 H(+). The catalysed reaction is dimethylallyl diphosphate + 2 oxidized [2Fe-2S]-[ferredoxin] + H2O = (2E)-4-hydroxy-3-methylbut-2-enyl diphosphate + 2 reduced [2Fe-2S]-[ferredoxin] + 2 H(+). Its pathway is isoprenoid biosynthesis; dimethylallyl diphosphate biosynthesis; dimethylallyl diphosphate from (2E)-4-hydroxy-3-methylbutenyl diphosphate: step 1/1. It functions in the pathway isoprenoid biosynthesis; isopentenyl diphosphate biosynthesis via DXP pathway; isopentenyl diphosphate from 1-deoxy-D-xylulose 5-phosphate: step 6/6. Functionally, catalyzes the conversion of 1-hydroxy-2-methyl-2-(E)-butenyl 4-diphosphate (HMBPP) into a mixture of isopentenyl diphosphate (IPP) and dimethylallyl diphosphate (DMAPP). Acts in the terminal step of the DOXP/MEP pathway for isoprenoid precursor biosynthesis. The polypeptide is 4-hydroxy-3-methylbut-2-enyl diphosphate reductase (Prochlorococcus marinus (strain NATL1A)).